A 334-amino-acid chain; its full sequence is Mitochondrial glycine transporter (334 aa).

3 Solcar repeats span residues 22-106 (SKTT…LRQG), 135-219 (LSNW…LKRR), and 237-321 (SSSS…LILR). The next 6 helical transmembrane spans lie at 28-53 (FVAG…TRVQ), 81-107 (GTLP…RQGI), 141-166 (LATG…VRYE), 194-217 (GFGA…EQLK), 241-267 (INFV…KTRL), and 296-314 (GLGL…AWTV).

This sequence belongs to the mitochondrial carrier (TC 2.A.29) family. SLC25A38 subfamily.

It localises to the mitochondrion inner membrane. It carries out the reaction glycine(in) = glycine(out). Mitochondrial glycine transporter that imports glycine into the mitochondrial matrix. Plays an important role in providing glycine for the first enzymatic step in heme biosynthesis, the condensation of glycine with succinyl-CoA to produce 5-aminolevulinate (ALA) in the mitochondrial matrix. The polypeptide is Mitochondrial glycine transporter (Aspergillus clavatus (strain ATCC 1007 / CBS 513.65 / DSM 816 / NCTC 3887 / NRRL 1 / QM 1276 / 107)).